Here is a 132-residue protein sequence, read N- to C-terminus: Large ribosomal subunit protein uL14 (132 aa).

Belongs to the universal ribosomal protein uL14 family. In terms of assembly, part of the 50S ribosomal subunit. Forms a cluster with proteins L3 and L24e, part of which may contact the 16S rRNA in 2 intersubunit bridges.

Its function is as follows. Binds to 23S rRNA. Forms part of two intersubunit bridges in the 70S ribosome. In Methanococcus maripaludis (strain DSM 14266 / JCM 13030 / NBRC 101832 / S2 / LL), this protein is Large ribosomal subunit protein uL14.